Reading from the N-terminus, the 401-residue chain is MAAATVTVEEVRKAQRATGPATVLAIGTATPANCVHQADYPDYYFRITKSEHMTELKEKFKRMCDKSQIRKRYMHLTEEYLAENPNMCAYMAPSLDARQDIVVVEVPKLGKAAAQKAIKEWGQPKSKITHLVFCTTSGVDMPGADYQLTKMLGLRPSVKRLMMYQQGCFAGGTVLRVAKDLAENNRGARVLVVCSEITAVTFRGPSESHLDSMVGQALFGDGAAAVIVGADPDERVERPLFQLVSASQTILPDSEGAIDGHLREVGLTFHLLKDVPGLISKNIERSLEEAFKPLGITDYNSIFWVAHPGGPAILDQVEAKVGLKKERMRATRHVLSEYGNMSSACVLFILDEMRKRSAEDGQATTGEGLDWGVLFGFGPGLTVETVVLHSVPITTGAAITA.

Residue C168 is part of the active site.

This sequence belongs to the thiolase-like superfamily. Chalcone/stilbene synthases family.

It carries out the reaction (E)-4-coumaroyl-CoA + 3 malonyl-CoA + 3 H(+) = 2',4,4',6'-tetrahydroxychalcone + 3 CO2 + 4 CoA. It functions in the pathway secondary metabolite biosynthesis; flavonoid biosynthesis. Functionally, the primary product of this enzyme is 4,2',4',6'-tetrahydroxychalcone (also termed naringenin-chalcone or chalcone) which can under specific conditions spontaneously isomerize into naringenin. The sequence is that of Chalcone synthase 4 (CHS4) from Sorghum bicolor (Sorghum).